The chain runs to 588 residues: Adenine deaminase (588 aa).

Belongs to the metallo-dependent hydrolases superfamily. Adenine deaminase family. As to quaternary structure, homodimer. Mn(2+) is required as a cofactor.

It catalyses the reaction adenine + H2O + H(+) = hypoxanthine + NH4(+). The protein is Adenine deaminase of Escherichia coli O17:K52:H18 (strain UMN026 / ExPEC).